A 137-amino-acid polypeptide reads, in one-letter code: uncharacterized protein (137 aa).

Residues 1–15 (MKKLAIAGALLLLAG) form the signal peptide. The N-palmitoyl cysteine moiety is linked to residue C16. The S-diacylglycerol cysteine moiety is linked to residue C16.

It localises to the cell membrane. This is an uncharacterized protein from Escherichia coli (strain K12).